We begin with the raw amino-acid sequence, 86 residues long: Large ribosomal subunit protein bL27 (86 aa).

This sequence belongs to the bacterial ribosomal protein bL27 family.

The protein is Large ribosomal subunit protein bL27 of Cupriavidus metallidurans (strain ATCC 43123 / DSM 2839 / NBRC 102507 / CH34) (Ralstonia metallidurans).